Reading from the N-terminus, the 340-residue chain is Phospho-N-acetylmuramoyl-pentapeptide-transferase (340 aa).

10 helical membrane-spanning segments follow: residues 3–23 (MSLI…PHFI), 53–73 (GGTV…FHVF), 79–99 (AYGA…IGFL), 119–139 (MALQ…PSGT), 144–164 (IGGL…FWIV), 176–196 (IDGL…IIAF), 200–220 (ELAI…FFVF), 227–247 (VFMG…ISIA), 250–270 (VEWT…SVML), and 315–335 (VDAF…WMVL).

This sequence belongs to the glycosyltransferase 4 family. MraY subfamily. Mg(2+) is required as a cofactor.

It localises to the cell membrane. It catalyses the reaction UDP-N-acetyl-alpha-D-muramoyl-L-alanyl-gamma-D-glutamyl-L-lysyl-D-alanyl-D-alanine + di-trans,octa-cis-undecaprenyl phosphate = Mur2Ac(oyl-L-Ala-gamma-D-Glu-L-Lys-D-Ala-D-Ala)-di-trans,octa-cis-undecaprenyl diphosphate + UMP. The protein operates within cell wall biogenesis; peptidoglycan biosynthesis. In terms of biological role, catalyzes the initial step of the lipid cycle reactions in the biosynthesis of the cell wall peptidoglycan: transfers peptidoglycan precursor phospho-MurNAc-pentapeptide from UDP-MurNAc-pentapeptide onto the lipid carrier undecaprenyl phosphate, yielding undecaprenyl-pyrophosphoryl-MurNAc-pentapeptide, known as lipid I. In Streptococcus thermophilus (strain ATCC BAA-250 / LMG 18311), this protein is Phospho-N-acetylmuramoyl-pentapeptide-transferase.